The primary structure comprises 205 residues: CASP-like protein 3A1 (205 aa).

Residues 1–39 are Cytoplasmic-facing; sequence MGIGMDSSTMSGPLVAHSGILDGDYEKRPAVCKMQMRFD. Residues 40–60 form a helical membrane-spanning segment; that stretch reads LANVGLRVLSLACSLVALVSM. Residues 61–89 lie on the Extracellular side of the membrane; sequence ASNQESGVVTVFGFKLPVYSKWSYSDSFE. The helical transmembrane segment at 90-110 threads the bilayer; sequence FLVGASAAAAAHSLLQLLLCG. Topologically, residues 111 to 125 are cytoplasmic; that stretch reads MKMVKRASTIPSRNH. The chain crosses the membrane as a helical span at residues 126-146; sequence AWLLFAGDQVFAYGMLAAASA. Over 147–176 the chain is Extracellular; the sequence is AAGVTNLNRTGFRHSDLPNFCKPLHRFCDK. A glycan (N-linked (GlcNAc...) asparagine) is linked at Asn154. The chain crosses the membrane as a helical span at residues 177-197; sequence AAISIVFAFISSLILGGSAVL. Topologically, residues 198 to 205 are cytoplasmic; the sequence is DVFWLSKN.

The protein belongs to the Casparian strip membrane proteins (CASP) family. In terms of assembly, homodimer and heterodimers.

Its subcellular location is the cell membrane. This is CASP-like protein 3A1 from Picea sitchensis (Sitka spruce).